Consider the following 800-residue polypeptide: Mitochondrial intermediate peptidase (800 aa).

Residues 1 to 23 constitute a mitochondrion transit peptide; it reads MAGHMLMPLRRRPWTCRACLQRL. The span at 27–41 shows a compositional bias: polar residues; it reads RRSLETAASPSSQSD. The disordered stretch occupies residues 27-59; it reads RRSLETAASPSSQSDVYDYAPTNHSTQKKSNDE. Zn(2+) is bound at residue His563. Glu564 is a catalytic residue. Residues His567 and His570 each contribute to the Zn(2+) site.

It belongs to the peptidase M3 family. Zn(2+) is required as a cofactor.

It is found in the mitochondrion matrix. It carries out the reaction Release of an N-terminal octapeptide as second stage of processing of some proteins imported into the mitochondrion.. In terms of biological role, cleaves proteins, imported into the mitochondrion, to their mature size. While most mitochondrial precursor proteins are processed to the mature form in one step by mitochondrial processing peptidase (MPP), the sequential cleavage by MIP of an octapeptide after initial processing by MPP is a required step for a subgroup of nuclear-encoded precursor proteins destined for the matrix or the inner membrane. This Aspergillus oryzae (strain ATCC 42149 / RIB 40) (Yellow koji mold) protein is Mitochondrial intermediate peptidase (oct1).